A 151-amino-acid chain; its full sequence is SsrA-binding protein (151 aa).

This sequence belongs to the SmpB family.

The protein resides in the cytoplasm. Required for rescue of stalled ribosomes mediated by trans-translation. Binds to transfer-messenger RNA (tmRNA), required for stable association of tmRNA with ribosomes. tmRNA and SmpB together mimic tRNA shape, replacing the anticodon stem-loop with SmpB. tmRNA is encoded by the ssrA gene; the 2 termini fold to resemble tRNA(Ala) and it encodes a 'tag peptide', a short internal open reading frame. During trans-translation Ala-aminoacylated tmRNA acts like a tRNA, entering the A-site of stalled ribosomes, displacing the stalled mRNA. The ribosome then switches to translate the ORF on the tmRNA; the nascent peptide is terminated with the 'tag peptide' encoded by the tmRNA and targeted for degradation. The ribosome is freed to recommence translation, which seems to be the essential function of trans-translation. The polypeptide is SsrA-binding protein (Nitrosomonas europaea (strain ATCC 19718 / CIP 103999 / KCTC 2705 / NBRC 14298)).